A 697-amino-acid chain; its full sequence is MTELSKYRNIGIFAHVDAGKTTTTERILKLTGKIHKIGEVHDGESTTDFMVQEAERGITIQSAAVSCFWNDHRFNVIDTPGHVDFTVEVYRSLKVLDGGVGVFCGSGGVEPQSETNWRYANDSEVARIIFVNKLDRMGADFLRVVKQTKDVLAANPLVMVLPIGIEDEFCGVVDLLTRKAHIWDDSGLPENFEIKDVPADMVDLVEEYREMLIEAAVEQDDDLLESYMEGVEPSMEDIKRCIRKGTRTLTFFPTYCGSAFKNKGMQLLLDAVVDYLPAPDEVDPQPLTDEEGVENGEFAIVDADLPLKALAFKIMDDRFGALTFVRIYSGRLKKGDTILNSFTGKSERVGRMVEMYADDRIEIESAQAGDIIAIVGMKNVQTGHTLCDPKHPCTLEAMVFPEPVISIAVAPKDKGGSEKMGIAIGKMIAEDPSFRVETDEDSGETILKGMGELHLDIKVDILKRTYGVELIVGEPQVAYRETITAEVEDSYTHKKQSGGSGQFGKIDYKIRPGEANTGFVFKSSVVGGNVPKEFWPAVQKGFGSMMNTGTIAGFPVLDVEFELTDGAFHAVDSSAIAFEIAAKGAFRQSIAKAKPQLLEPIMKVDVFSPDDNVGDVIGDLNRRRGMIKDQNAGVTGVRIKADVPLSEMFGYIGTLRTMTSGRGQFSMEFAHYAACPNSVSEKVVTQVKERKAAEAKK.

A tr-type G domain is found at 5–280; sequence SKYRNIGIFA…AVVDYLPAPD (276 aa). GTP is bound by residues 14–21, 78–82, and 132–135; these read AHVDAGKT, DTPGH, and NKLD.

The protein belongs to the TRAFAC class translation factor GTPase superfamily. Classic translation factor GTPase family. EF-G/EF-2 subfamily.

It localises to the cytoplasm. In terms of biological role, catalyzes the GTP-dependent ribosomal translocation step during translation elongation. During this step, the ribosome changes from the pre-translocational (PRE) to the post-translocational (POST) state as the newly formed A-site-bound peptidyl-tRNA and P-site-bound deacylated tRNA move to the P and E sites, respectively. Catalyzes the coordinated movement of the two tRNA molecules, the mRNA and conformational changes in the ribosome. The chain is Elongation factor G 2 from Shewanella denitrificans (strain OS217 / ATCC BAA-1090 / DSM 15013).